Reading from the N-terminus, the 283-residue chain is Protein FDD123 (283 aa).

Helical transmembrane passes span tryptophan 24 to phenylalanine 44, leucine 52 to alanine 72, tyrosine 97 to leucine 117, isoleucine 122 to valine 142, tryptophan 148 to histidine 168, isoleucine 185 to alanine 205, and methionine 217 to tryptophan 237.

This sequence belongs to the archaeal/bacterial/fungal opsin family.

The protein resides in the membrane. This is Protein FDD123 (FDD123) from Trametes versicolor (White-rot fungus).